A 235-amino-acid chain; its full sequence is 5'-methylthioadenosine/S-adenosylhomocysteine nucleosidase (235 aa).

Catalysis depends on glutamate 12, which acts as the Proton acceptor. Substrate is bound by residues glycine 78, isoleucine 152, and 173–174; that span reads ME. Catalysis depends on aspartate 197, which acts as the Proton donor.

It belongs to the PNP/UDP phosphorylase family. MtnN subfamily. As to quaternary structure, homodimer.

The enzyme catalyses S-adenosyl-L-homocysteine + H2O = S-(5-deoxy-D-ribos-5-yl)-L-homocysteine + adenine. It catalyses the reaction S-methyl-5'-thioadenosine + H2O = 5-(methylsulfanyl)-D-ribose + adenine. The catalysed reaction is 5'-deoxyadenosine + H2O = 5-deoxy-D-ribose + adenine. It functions in the pathway amino-acid biosynthesis; L-methionine biosynthesis via salvage pathway; S-methyl-5-thio-alpha-D-ribose 1-phosphate from S-methyl-5'-thioadenosine (hydrolase route): step 1/2. Functionally, catalyzes the irreversible cleavage of the glycosidic bond in both 5'-methylthioadenosine (MTA) and S-adenosylhomocysteine (SAH/AdoHcy) to adenine and the corresponding thioribose, 5'-methylthioribose and S-ribosylhomocysteine, respectively. Also cleaves 5'-deoxyadenosine, a toxic by-product of radical S-adenosylmethionine (SAM) enzymes, into 5-deoxyribose and adenine. Thus, is required for in vivo function of the radical SAM enzymes biotin synthase and lipoic acid synthase, that are inhibited by 5'-deoxyadenosine accumulation. This Proteus mirabilis (strain HI4320) protein is 5'-methylthioadenosine/S-adenosylhomocysteine nucleosidase.